Here is a 68-residue protein sequence, read N- to C-terminus: Protease A inhibitor 3 (68 aa).

An N-acetylmethionine modification is found at methionine 1. Residues 1–14 are compositionally biased toward polar residues; sequence MNTDQQKVSEIFQS. 2 disordered regions span residues 1 to 21 and 33 to 68; these read MNTDQQKVSEIFQSSKEKLQG and MASQDKDGKTTDADESEKHNYQEQYNKLKGAGHKKE. The segment at 1 to 32 is inhibitory domain; that stretch reads MNTDQQKVSEIFQSSKEKLQGDAKVVSDAFKK. The segment covering 33–53 has biased composition (basic and acidic residues); the sequence is MASQDKDGKTTDADESEKHNY.

It belongs to the protease inhibitor I34 family.

Its function is as follows. Specific and potent inhibitor for yeast aspartic protease A (yscA). The proteinase acts as a folding template stabilizing the helical conformation in the inhibitor, which results in the potent and specific blockage of the proteolytic activity. The sequence is that of Protease A inhibitor 3 (PAI3) from Saccharomyces cerevisiae (strain ATCC 204508 / S288c) (Baker's yeast).